The sequence spans 106 residues: UPF0145 protein TM_0763 (106 aa).

Belongs to the UPF0145 family.

The protein is UPF0145 protein TM_0763 of Thermotoga maritima (strain ATCC 43589 / DSM 3109 / JCM 10099 / NBRC 100826 / MSB8).